The primary structure comprises 206 residues: Phosphoheptose isomerase (206 aa).

The 159-residue stretch at Leu37–Glu195 folds into the SIS domain. Residue Asn52–Gly54 participates in substrate binding. Zn(2+)-binding residues include His61 and Glu65. Substrate contacts are provided by residues Glu65, Asn93–Asp94, Ser119–Ser121, Ser124, and Gln172. Residues Gln172 and His180 each coordinate Zn(2+).

The protein belongs to the SIS family. GmhA subfamily. In terms of assembly, homotetramer. It depends on Zn(2+) as a cofactor.

It localises to the cytoplasm. The enzyme catalyses 2 D-sedoheptulose 7-phosphate = D-glycero-alpha-D-manno-heptose 7-phosphate + D-glycero-beta-D-manno-heptose 7-phosphate. The protein operates within carbohydrate biosynthesis; D-glycero-D-manno-heptose 7-phosphate biosynthesis; D-glycero-alpha-D-manno-heptose 7-phosphate and D-glycero-beta-D-manno-heptose 7-phosphate from sedoheptulose 7-phosphate: step 1/1. Its function is as follows. Catalyzes the isomerization of sedoheptulose 7-phosphate in D-glycero-D-manno-heptose 7-phosphate. This chain is Phosphoheptose isomerase, found in Hamiltonella defensa subsp. Acyrthosiphon pisum (strain 5AT).